Here is a 201-residue protein sequence, read N- to C-terminus: Transgelin (201 aa).

A2 is modified (N-acetylalanine). Residues E24–A137 form the Calponin-homology (CH) domain. Positions K154 to R161 are could be involved in actin-binding. S166 is subject to Phosphoserine. K172 is modified (N6-acetyllysine). Residues I175–I200 form a Calponin-like repeat. Phosphoserine is present on S181. R183 carries the omega-N-methylarginine modification.

Belongs to the calponin family. Smooth muscle and mesenchymal cells but not in skeletal muscle or lymphocytes.

The protein localises to the cytoplasm. In terms of biological role, actin cross-linking/gelling protein. The polypeptide is Transgelin (Tagln) (Rattus norvegicus (Rat)).